We begin with the raw amino-acid sequence, 501 residues long: Bifunctional purine biosynthesis protein PurH (501 aa).

Residues Met1–Ser144 form the MGS-like domain.

It belongs to the PurH family.

It catalyses the reaction (6R)-10-formyltetrahydrofolate + 5-amino-1-(5-phospho-beta-D-ribosyl)imidazole-4-carboxamide = 5-formamido-1-(5-phospho-D-ribosyl)imidazole-4-carboxamide + (6S)-5,6,7,8-tetrahydrofolate. It carries out the reaction IMP + H2O = 5-formamido-1-(5-phospho-D-ribosyl)imidazole-4-carboxamide. The protein operates within purine metabolism; IMP biosynthesis via de novo pathway; 5-formamido-1-(5-phospho-D-ribosyl)imidazole-4-carboxamide from 5-amino-1-(5-phospho-D-ribosyl)imidazole-4-carboxamide (10-formyl THF route): step 1/1. It functions in the pathway purine metabolism; IMP biosynthesis via de novo pathway; IMP from 5-formamido-1-(5-phospho-D-ribosyl)imidazole-4-carboxamide: step 1/1. The protein is Bifunctional purine biosynthesis protein PurH of Clostridium perfringens (strain SM101 / Type A).